A 322-amino-acid polypeptide reads, in one-letter code: Cyclin mcs2 (322 aa).

Residue Ser-310 is modified to Phosphoserine.

The protein belongs to the cyclin family. Cyclin C subfamily. One of the nine subunits forming the core-TFIIH basal transcription factor. Interacts with crk1 and skp1.

It is found in the nucleus. Its function is as follows. Essential for progression through the cell cycle. Possesses kinase activity that can be detected when myelin basic protein (MBP) is provided as an exogenous substrate. This is Cyclin mcs2 (mcs2) from Schizosaccharomyces pombe (strain 972 / ATCC 24843) (Fission yeast).